The primary structure comprises 75 residues: Defense protein 6 (75 aa).

The first 20 residues, 1–20 (MKTCLVFAFFLVAVFAAVQA), serve as a signal peptide directing secretion. The propeptide occupies 21–32 (EENDSPQTLPRR). Cystine bridges form between cysteine 44–cysteine 63, cysteine 49–cysteine 68, and cysteine 53–cysteine 70.

The protein belongs to the invertebrate defensin family.

It is found in the secreted. In terms of biological role, has antibacterial activity. The sequence is that of Defense protein 6 from Lonomia obliqua (Moth).